The chain runs to 1226 residues: Chromosome partition protein Smc (1226 aa).

32–39 (PNGCGKSN) serves as a coordination point for ATP. 2 coiled-coil regions span residues 173–231 (ITKF…IKRN) and 269–491 (NSLE…SKSL). One can recognise an SMC hinge domain in the interval 527–635 (YQLLGNLIQC…FDGYFIASKF (109 aa)). 3 coiled-coil regions span residues 679 to 741 (QGVV…AAKK), 775 to 965 (MLES…LREA), and 1006 to 1078 (HRRY…KSKE).

This sequence belongs to the SMC family. In terms of assembly, homodimer.

Its subcellular location is the cytoplasm. Functionally, required for chromosome condensation and partitioning. The protein is Chromosome partition protein Smc of Halobacteriovorax marinus (strain ATCC BAA-682 / DSM 15412 / SJ) (Bacteriovorax marinus).